We begin with the raw amino-acid sequence, 571 residues long: Proline--tRNA ligase (571 aa).

The protein belongs to the class-II aminoacyl-tRNA synthetase family. ProS type 1 subfamily. Homodimer.

It localises to the cytoplasm. The catalysed reaction is tRNA(Pro) + L-proline + ATP = L-prolyl-tRNA(Pro) + AMP + diphosphate. Its function is as follows. Catalyzes the attachment of proline to tRNA(Pro) in a two-step reaction: proline is first activated by ATP to form Pro-AMP and then transferred to the acceptor end of tRNA(Pro). As ProRS can inadvertently accommodate and process non-cognate amino acids such as alanine and cysteine, to avoid such errors it has two additional distinct editing activities against alanine. One activity is designated as 'pretransfer' editing and involves the tRNA(Pro)-independent hydrolysis of activated Ala-AMP. The other activity is designated 'posttransfer' editing and involves deacylation of mischarged Ala-tRNA(Pro). The misacylated Cys-tRNA(Pro) is not edited by ProRS. The chain is Proline--tRNA ligase from Actinobacillus succinogenes (strain ATCC 55618 / DSM 22257 / CCUG 43843 / 130Z).